The following is a 372-amino-acid chain: D-alanine--D-alanine ligase (372 aa).

The ATP-grasp domain occupies 145 to 349 (KTVLRAGGIP…CPNLLDQLIE (205 aa)). Residue 176 to 231 (DRWGTSELFVKAVSLGSSVATLPVKTETEFTKAVKEVFRYDDRLMVEPRIRGREIE) participates in ATP binding. Mg(2+)-binding residues include Asp303, Glu316, and Asn318.

The protein belongs to the D-alanine--D-alanine ligase family. Mg(2+) serves as cofactor. Mn(2+) is required as a cofactor.

It localises to the cytoplasm. It catalyses the reaction 2 D-alanine + ATP = D-alanyl-D-alanine + ADP + phosphate + H(+). It participates in cell wall biogenesis; peptidoglycan biosynthesis. Cell wall formation. This Coxiella burnetii (strain RSA 331 / Henzerling II) protein is D-alanine--D-alanine ligase.